The primary structure comprises 383 residues: MSHNAIRPWRNIYRRKSRQIHVGPVPIGGDAPIAVQTMTNTLTTDIPGTIAQVQAAADAGADIVRVSVPDVDSSRALKEIVRESPVPIVADIHFHYKRGIEAAEAGAACLRINPGNIGDEKRVKEVIKAARDNNCSMRIGVNAGSLEKHLLDKYAEPCPEAMVESALDHIKILQDNDFHEFKISCKASDVFLSAAAYQALADATDAPLHLGITEAGGLMSGTIKSAIGLGNLLWMGIGDTIRVSLSADPVEEIKVGYDILKSLGLRHRGVNVISCPSCARQGFDVIKTVEALEQRLEHIKTPMSLSIIGCVVNGPGEALMTDVGFTGGGAGSGMVYLAGKQSHKMSNEQMIDHIVEQVEKRAAELDAIEAAEAAQDAAREPAE.

The [4Fe-4S] cluster site is built by cysteine 275, cysteine 278, cysteine 310, and glutamate 317.

Belongs to the IspG family. [4Fe-4S] cluster is required as a cofactor.

The enzyme catalyses (2E)-4-hydroxy-3-methylbut-2-enyl diphosphate + oxidized [flavodoxin] + H2O + 2 H(+) = 2-C-methyl-D-erythritol 2,4-cyclic diphosphate + reduced [flavodoxin]. It participates in isoprenoid biosynthesis; isopentenyl diphosphate biosynthesis via DXP pathway; isopentenyl diphosphate from 1-deoxy-D-xylulose 5-phosphate: step 5/6. Converts 2C-methyl-D-erythritol 2,4-cyclodiphosphate (ME-2,4cPP) into 1-hydroxy-2-methyl-2-(E)-butenyl 4-diphosphate. This chain is 4-hydroxy-3-methylbut-2-en-1-yl diphosphate synthase (flavodoxin), found in Dinoroseobacter shibae (strain DSM 16493 / NCIMB 14021 / DFL 12).